The primary structure comprises 666 residues: MPPGGSGPGGCPRRPPALAGPLPPPPPPPPPPLLPLLPLLLLLLLGAAEGARVSSSLSTTHHVHHFHSKHGTVPIAINRMPFLTRGGHAGTTYIFGKGGALITYTWPPNDRPSTRMDRLAVGFSTHQRSAVLVRVDSASGLGDYLQLHIDQGTVGVIFNVGTDDITIDEPNAIVSDGKYHVVRFTRSGGNATLQVDSWPVNERYPAGNFDNERLAIARQRIPYRLGRVVDEWLLDKGRQLTIFNSQAAIKIGGRDQGRPFQGQVSGLYYNGLKVLALAAESDPNVRTEGHLRLVGEGPSVLLSAETTATTLLADMATTIMETTTTMATTTTRRGRSPTLRDSTTQNTDDLLVASAECPSDDEDLEECEPSTGGELILPIITEDSLDPPPVATRSPFVPPPPTFYPFLTGVGATQDTLPPPAARRPPSGGPCQAERDDSDCEEPIEASGFASGEVFDSSLPPTDDEDFYTTFPLVTDRTTLLSPRKPAPRPNLRTDGATGAPGVLFAPSAPAPNLPAGKMNHRDPLQPLLENPPLGPGAPTSFEPRRPPPLRPGVTSAPGFPHLPTANPTGPGERGPPGAVEVIRESSSTTGMVVGIVAAAALCILILLYAMYKYRNRDEGSYQVDQSRNYISNSAQSNGAVVKEKAPAAPKTPSKAKKNKDKEYYV.

The segment covering 1–10 has biased composition (gly residues); that stretch reads MPPGGSGPGG. The disordered stretch occupies residues 1 to 30; that stretch reads MPPGGSGPGGCPRRPPALAGPLPPPPPPPP. The first 50 residues, 1-50, serve as a signal peptide directing secretion; it reads MPPGGSGPGGCPRRPPALAGPLPPPPPPPPPPLLPLLPLLLLLLLGAAEG. Residues 21-30 show a composition bias toward pro residues; it reads PLPPPPPPPP. Residues 51–590 are Extracellular-facing; it reads ARVSSSLSTT…EVIRESSSTT (540 aa). Residues 91–299 enclose the Laminin G-like domain; that stretch reads TTYIFGKGGA…HLRLVGEGPS (209 aa). 2 residues coordinate Ca(2+): aspartate 143 and valine 160. Asparagine 190 carries an N-linked (GlcNAc...) asparagine glycan. Isoleucine 242 and asparagine 244 together coordinate Ca(2+). Positions 327 to 346 are disordered; that stretch reads ATTTTRRGRSPTLRDSTTQN. Serine 354 carries an O-linked (Xyl...) (heparan sulfate) serine glycan. Disordered stretches follow at residues 412-443 and 479-580; these read ATQDTLPPPAARRPPSGGPCQAERDDSDCEEP and TLLS…PGAV. The chain crosses the membrane as a helical span at residues 591–611; it reads GMVVGIVAAAALCILILLYAM. Residues 612 to 666 lie on the Cytoplasmic side of the membrane; sequence YKYRNRDEGSYQVDQSRNYISNSAQSNGAVVKEKAPAAPKTPSKAKKNKDKEYYV. Residues 633 to 666 form a disordered region; the sequence is NSAQSNGAVVKEKAPAAPKTPSKAKKNKDKEYYV.

Belongs to the neurexin family. In terms of assembly, interacts (via cytoplasmic C-terminal region) with CASK. Specific isoforms bind alpha-dystroglycan and neuroligins NLGN1, NLGN2 and NLGN3. Interacts with CBLN1, CBLN2 and, less avidly, with CBLN4. Interacts with CLSTN3. In terms of processing, O-glycosylated; contains heparan sulfate. Heparan sulfate attachment is required for synapse development by mediating interactions with neuroligins.

The protein localises to the presynaptic cell membrane. Neuronal cell surface protein that may be involved in cell recognition and cell adhesion. This chain is Neurexin-2-beta (NRXN2), found in Homo sapiens (Human).